Reading from the N-terminus, the 223-residue chain is Noggin (223 aa).

The N-terminal stretch at 1-26 is a signal peptide; the sequence is MDPPRLRVATYLLLLSVGLLLHGGAC. N61 is a glycosylation site (N-linked (GlcNAc...) asparagine). 4 disulfide bridges follow: C143-C180, C166-C217, C172-C219, and C195-C204.

This sequence belongs to the noggin family. In terms of assembly, homodimer.

Its subcellular location is the secreted. Its function is as follows. Inhibitor of bone morphogenetic proteins (BMP) signaling. In Takifugu rubripes (Japanese pufferfish), this protein is Noggin (nog).